We begin with the raw amino-acid sequence, 110 residues long: NAD(P)H-quinone oxidoreductase subunit M (110 aa).

It belongs to the complex I NdhM subunit family. NDH-1 can be composed of about 15 different subunits; different subcomplexes with different compositions have been identified which probably have different functions.

The protein localises to the cellular thylakoid membrane. It catalyses the reaction a plastoquinone + NADH + (n+1) H(+)(in) = a plastoquinol + NAD(+) + n H(+)(out). The catalysed reaction is a plastoquinone + NADPH + (n+1) H(+)(in) = a plastoquinol + NADP(+) + n H(+)(out). Its function is as follows. NDH-1 shuttles electrons from an unknown electron donor, via FMN and iron-sulfur (Fe-S) centers, to quinones in the respiratory and/or the photosynthetic chain. The immediate electron acceptor for the enzyme in this species is believed to be plastoquinone. Couples the redox reaction to proton translocation, and thus conserves the redox energy in a proton gradient. Cyanobacterial NDH-1 also plays a role in inorganic carbon-concentration. This is NAD(P)H-quinone oxidoreductase subunit M from Synechococcus elongatus (strain ATCC 33912 / PCC 7942 / FACHB-805) (Anacystis nidulans R2).